The following is a 579-amino-acid chain: Putative truncated flagellar export/assembly protein LfhA (579 aa).

3 helical membrane-spanning segments follow: residues 86 to 106, 124 to 144, and 177 to 197; these read AIAGMMILAINLIGGVCIGIF, IGDGLVAQIPSLLLSTAAAII, and FVLAVVPGMPHLPFLLFSALL.

The protein belongs to the FHIPEP (flagella/HR/invasion proteins export pore) family.

It is found in the cell inner membrane. The polypeptide is Putative truncated flagellar export/assembly protein LfhA (Escherichia coli (strain K12)).